The primary structure comprises 133 residues: Small ribosomal subunit protein uS8 (133 aa).

It belongs to the universal ribosomal protein uS8 family. In terms of assembly, part of the 30S ribosomal subunit. Contacts proteins S5 and S12.

Functionally, one of the primary rRNA binding proteins, it binds directly to 16S rRNA central domain where it helps coordinate assembly of the platform of the 30S subunit. The chain is Small ribosomal subunit protein uS8 from Prochlorococcus marinus (strain MIT 9215).